Reading from the N-terminus, the 239-residue chain is MAMHTNGPVFAGWDGSVIQAQQLQQQLAQRVLLHDEVSATPQLLAGFDVGFEDDGQSTRAAAVLLDAHTLLPLETHVARVPTSMPYVPGLLSFRELPALLQALALLSRTPDLVFIDGQGIAHPRRLGIAAHFGVVTGLPCIGIAKQRLAGSFAEPGPERGDHTPILLGGAQIGWALRSKPRCNPLIVSPGHRVSMQGALGWNLRTLRSYRLPEPTRLADRLASRRGKMPALAADTPLLF.

2 residues coordinate Mg(2+): D48 and D116.

This sequence belongs to the endonuclease V family. Mg(2+) serves as cofactor.

Its subcellular location is the cytoplasm. The catalysed reaction is Endonucleolytic cleavage at apurinic or apyrimidinic sites to products with a 5'-phosphate.. In terms of biological role, DNA repair enzyme involved in the repair of deaminated bases. Selectively cleaves double-stranded DNA at the second phosphodiester bond 3' to a deoxyinosine leaving behind the intact lesion on the nicked DNA. The sequence is that of Endonuclease V from Xanthomonas oryzae pv. oryzae (strain MAFF 311018).